The chain runs to 381 residues: Mannitol-1-phosphate 5-dehydrogenase (381 aa).

Residue 3 to 14 (TLHFGAGNIGRG) participates in NAD(+) binding.

The protein belongs to the mannitol dehydrogenase family.

The catalysed reaction is D-mannitol 1-phosphate + NAD(+) = beta-D-fructose 6-phosphate + NADH + H(+). This is Mannitol-1-phosphate 5-dehydrogenase from Aeromonas salmonicida (strain A449).